We begin with the raw amino-acid sequence, 369 residues long: Mitogen-activated protein kinase 5 (369 aa).

In terms of domain architecture, Protein kinase spans 36–322 (QPPIMPIGRG…VEEALDHPYL (287 aa)). Residues 42 to 50 (IGRGAYGIV) and Lys-65 each bind ATP. The Proton acceptor role is filled by Asp-162. Position 194 is a phosphothreonine (Thr-194). The short motif at 194–196 (TEY) is the TXY element. A Phosphotyrosine modification is found at Tyr-196.

The protein belongs to the protein kinase superfamily. CMGC Ser/Thr protein kinase family. MAP kinase subfamily. In terms of assembly, interacts with MKK1. Dually phosphorylated on Thr-194 and Tyr-196, which activates the enzyme.

It catalyses the reaction L-seryl-[protein] + ATP = O-phospho-L-seryl-[protein] + ADP + H(+). The enzyme catalyses L-threonyl-[protein] + ATP = O-phospho-L-threonyl-[protein] + ADP + H(+). Its activity is regulated as follows. Activated by threonine and tyrosine phosphorylation. Its function is as follows. Involved in disease resistance and abiotic stress tolerance signaling pathways. This Oryza sativa subsp. indica (Rice) protein is Mitogen-activated protein kinase 5 (MPK5).